The sequence spans 199 residues: Molybdenum cofactor guanylyltransferase (199 aa).

Residues 12–14 (LAG), Lys25, Asn53, Asp71, and Asp101 contribute to the GTP site. Asp101 serves as a coordination point for Mg(2+).

Belongs to the MobA family. In terms of assembly, monomer. It depends on Mg(2+) as a cofactor.

Its subcellular location is the cytoplasm. It carries out the reaction Mo-molybdopterin + GTP + H(+) = Mo-molybdopterin guanine dinucleotide + diphosphate. Functionally, transfers a GMP moiety from GTP to Mo-molybdopterin (Mo-MPT) cofactor (Moco or molybdenum cofactor) to form Mo-molybdopterin guanine dinucleotide (Mo-MGD) cofactor. The sequence is that of Molybdenum cofactor guanylyltransferase from Cupriavidus necator (strain ATCC 17699 / DSM 428 / KCTC 22496 / NCIMB 10442 / H16 / Stanier 337) (Ralstonia eutropha).